The chain runs to 109 residues: Protein phosphatase 1 regulatory subunit 1C (109 aa).

The interval 25–109 (AEQIRKRRPT…TNEREEQRDH (85 aa)) is disordered. A compositionally biased stretch (basic and acidic residues) spans 45–54 (NPPEIDDKRV). A compositionally biased stretch (polar residues) spans 55-75 (PNTQGELQNASPKQRKQSVYT). Residues 100 to 109 (TNEREEQRDH) show a composition bias toward basic and acidic residues.

The protein belongs to the protein phosphatase inhibitor 1 family.

The protein resides in the cytoplasm. May increase cell susceptibility to TNF-induced apoptosis. The sequence is that of Protein phosphatase 1 regulatory subunit 1C (PPP1R1C) from Pongo abelii (Sumatran orangutan).